The following is a 449-amino-acid chain: UDP-N-acetylmuramoylalanine--D-glutamate ligase (449 aa).

ATP is bound at residue 118 to 124 (GTNGKTT).

This sequence belongs to the MurCDEF family.

The protein resides in the cytoplasm. It catalyses the reaction UDP-N-acetyl-alpha-D-muramoyl-L-alanine + D-glutamate + ATP = UDP-N-acetyl-alpha-D-muramoyl-L-alanyl-D-glutamate + ADP + phosphate + H(+). Its pathway is cell wall biogenesis; peptidoglycan biosynthesis. Its function is as follows. Cell wall formation. Catalyzes the addition of glutamate to the nucleotide precursor UDP-N-acetylmuramoyl-L-alanine (UMA). The polypeptide is UDP-N-acetylmuramoylalanine--D-glutamate ligase (Staphylococcus epidermidis (strain ATCC 12228 / FDA PCI 1200)).